A 1494-amino-acid chain; its full sequence is Neuropathy target esterase sws (1494 aa).

The Lumenal portion of the chain corresponds to Met-1–Thr-35. Residues Met-36–Phe-56 form a helical membrane-spanning segment. At Lys-57–Leu-1494 the chain is on the cytoplasmic side. Ile-176–Arg-303 contributes to the a nucleoside 3',5'-cyclic phosphate binding site. Residues Ala-362–Ala-372 are compositionally biased toward low complexity. Disordered regions lie at residues Ala-362 to Gly-405 and Asn-422 to Val-452. Over residues Gly-435–Gln-449 the composition is skewed to polar residues. Residue Ser-443 is modified to Phosphoserine. Residues Glu-474–Arg-601 and Ile-590–Arg-717 contribute to the a nucleoside 3',5'-cyclic phosphate site. Residues Leu-944 to Arg-1110 enclose the PNPLA domain. A GXGXXG motif is present at residues Gly-948–Gly-953. A GXSXG motif is present at residues Gly-975–Gly-979. The active-site Nucleophile is Ser-977. The active-site Proton acceptor is the Asp-1097. The DGA/G motif lies at Asp-1097–Gly-1099. The tract at residues Met-1367–Leu-1494 is disordered. The segment covering Ala-1370–Ala-1381 has biased composition (polar residues). Composition is skewed to basic and acidic residues over residues Ser-1389 to Ser-1420 and Met-1452 to Arg-1483. Positions Ser-1484 to Leu-1494 are enriched in polar residues.

It belongs to the NTE family. In terms of assembly, interacts with Pka-C3; interaction inhibits the catalytic function of Pka-C3 and the esterase activity of sws.

It localises to the endoplasmic reticulum membrane. The catalysed reaction is a 1-acyl-sn-glycero-3-phosphocholine + H2O = sn-glycerol 3-phosphocholine + a fatty acid + H(+). Functionally, phospholipase B that deacylates intracellular phosphatidylcholine (PtdCho), generating glycerophosphocholine (GroPtdCho). This deacylation occurs at both sn-2 and sn-1 positions of PtdCho. Its specific chemical modification by certain organophosphorus (OP) compounds leads to distal axonopathy. Plays a role in the signaling mechanism between neurons and glia that regulates glia wrapping during development of the adult brain. Essential for membrane lipid homeostasis and cell survival in both neurons and glia of the adult brain. The polypeptide is Neuropathy target esterase sws (Drosophila pseudoobscura pseudoobscura (Fruit fly)).